A 60-amino-acid chain; its full sequence is Metallothionein A (60 aa).

The interval 1–28 is beta; it reads MDPCECSKSGTCNCGGSCTCTNCSCKSC. A divalent metal cation is bound by residues Cys4, Cys6, Cys12, Cys14, Cys18, Cys20, Cys23, Cys25, Cys28, Cys32, Cys33, Cys35, Cys36, Cys40, Cys43, Cys47, Cys49, Cys54, Cys58, and Cys59. Residues 29-60 are alpha; the sequence is KKSCCPCCPSGCTKCASGCVCKGKTCDTSCCQ.

The protein belongs to the metallothionein superfamily. Type 1 family.

In terms of biological role, metallothioneins have a high content of cysteine residues that bind various heavy metals. This is Metallothionein A (mta) from Chionodraco rastrospinosus (Ocellated icefish).